A 211-amino-acid polypeptide reads, in one-letter code: HTH-type transcriptional repressor FabR (211 aa).

The HTH tetR-type domain occupies 10–70 (RTRRSLIEAA…TMVDESGLML (61 aa)). A DNA-binding region (H-T-H motif) is located at residues 33–52 (SLREVSREAGIAPTSFYRHF).

In terms of assembly, homodimer.

It localises to the cytoplasm. In terms of biological role, represses the transcription of fabB, involved in unsaturated fatty acid (UFA) biosynthesis. By controlling UFA production, FabR directly influences the physical properties of the membrane bilayer. This is HTH-type transcriptional repressor FabR from Yersinia pseudotuberculosis serotype O:1b (strain IP 31758).